The primary structure comprises 210 residues: Signal peptidase complex catalytic subunit SEC11 (210 aa).

Over 1 to 21 (MLAGLSPHLSNLRRSLTQVLN) the chain is Cytoplasmic. The helical; Signal-anchor for type II membrane protein transmembrane segment at 22–38 (FALVLSTAFMMWKGLSI) threads the bilayer. Over 39 to 210 (YTNSSSPIVV…MGAMVILQRE (172 aa)) the chain is Lumenal. N-linked (GlcNAc...) asparagine glycosylation is present at Asn41. Residues Ser53, His92, and Asp152 each act as charge relay system in the active site. The segment at 196–207 (VLLGIMGAMVIL) is C-terminal short (CTS) helix.

Belongs to the peptidase S26B family. In terms of assembly, component of the signal peptidase complex (SPC) composed of a catalytic subunit SEC11 and three accessory subunits SPC1, SPC2 and SPC3. The complex induces a local thinning of the ER membrane which is used to measure the length of the signal peptide (SP) h-region of protein substrates. This ensures the selectivity of the complex towards h-regions shorter than 18-20 amino acids. SPC associates with the translocon complex.

The protein resides in the endoplasmic reticulum membrane. It carries out the reaction Cleavage of hydrophobic, N-terminal signal or leader sequences from secreted and periplasmic proteins.. Catalytic component of the signal peptidase complex (SPC) which catalyzes the cleavage of N-terminal signal sequences from nascent proteins as they are translocated into the lumen of the endoplasmic reticulum. Specifically cleaves N-terminal signal peptides that contain a hydrophobic alpha-helix (h-region) shorter than 18-20 amino acids. In Coccidioides posadasii (strain RMSCC 757 / Silveira) (Valley fever fungus), this protein is Signal peptidase complex catalytic subunit SEC11 (SEC11).